A 1662-amino-acid polypeptide reads, in one-letter code: Cortactin-binding protein 2 (1662 aa).

Disordered stretches follow at residues M1–A23, K203–E222, S361–G440, G454–R479, and R498–D618. A coiled-coil region spans residues K119–K276. Residues P386–S396 show a composition bias toward low complexity. Polar residues predominate over residues Q411–A422. R498 carries the asymmetric dimethylarginine modification. A compositionally biased stretch (polar residues) spans T583–V597. ANK repeat units follow at residues G709 to Y739, D743 to A772, N776 to H805, G809 to V838, D842 to G871, and E912 to R942. The interval G1450–W1474 is disordered. S1524 bears the Phosphoserine mark. 2 disordered regions span residues S1580–T1602 and S1618–K1662. Positions K1582–K1599 are enriched in polar residues. The segment covering S1624–Q1638 has biased composition (low complexity). The span at I1639–N1648 shows a compositional bias: polar residues. A compositionally biased stretch (basic and acidic residues) spans W1649–K1662.

In terms of assembly, interacts with CTTN/cortactin SH3 domain. Interacts with STRN, STRN4/zinedin and MOB4/phocein; this interactions mediate the association with the STRIPAK core complex and may regulate dendritic spine distribution of the STRIPAK complex in hippocampal neurons. Activation of glutamate receptors weakens the interaction with STRN and STRN4.

Its subcellular location is the cytoplasm. The protein resides in the cell cortex. It is found in the cell projection. The protein localises to the dendritic spine. Its function is as follows. Regulates the dendritic spine distribution of CTTN/cortactin in hippocampal neurons, and thus controls dendritic spinogenesis and dendritic spine maintenance. Associates with the striatin-interacting phosphatase and kinase (STRIPAK) core complex to regulate dendritic spine distribution of the STRIPAK complex in hippocampal neurons. This chain is Cortactin-binding protein 2 (CTTNBP2), found in Chlorocebus aethiops (Green monkey).